The following is a 376-amino-acid chain: Queuine tRNA-ribosyltransferase (376 aa).

Asp92 functions as the Proton acceptor in the catalytic mechanism. Substrate contacts are provided by residues 92–96, Asp146, Gln190, and Gly217; that span reads DSGGF. An RNA binding region spans residues 248 to 254; that stretch reads GVGRPED. Catalysis depends on Asp267, which acts as the Nucleophile. Residues 272–276 form an RNA binding; important for wobble base 34 recognition region; it reads TRNAR. Cys305, Cys307, Cys310, and His337 together coordinate Zn(2+).

Belongs to the queuine tRNA-ribosyltransferase family. As to quaternary structure, homodimer. Within each dimer, one monomer is responsible for RNA recognition and catalysis, while the other monomer binds to the replacement base PreQ1. Requires Zn(2+) as cofactor.

It carries out the reaction 7-aminomethyl-7-carbaguanine + guanosine(34) in tRNA = 7-aminomethyl-7-carbaguanosine(34) in tRNA + guanine. It functions in the pathway tRNA modification; tRNA-queuosine biosynthesis. Its function is as follows. Catalyzes the base-exchange of a guanine (G) residue with the queuine precursor 7-aminomethyl-7-deazaguanine (PreQ1) at position 34 (anticodon wobble position) in tRNAs with GU(N) anticodons (tRNA-Asp, -Asn, -His and -Tyr). Catalysis occurs through a double-displacement mechanism. The nucleophile active site attacks the C1' of nucleotide 34 to detach the guanine base from the RNA, forming a covalent enzyme-RNA intermediate. The proton acceptor active site deprotonates the incoming PreQ1, allowing a nucleophilic attack on the C1' of the ribose to form the product. After dissociation, two additional enzymatic reactions on the tRNA convert PreQ1 to queuine (Q), resulting in the hypermodified nucleoside queuosine (7-(((4,5-cis-dihydroxy-2-cyclopenten-1-yl)amino)methyl)-7-deazaguanosine). The chain is Queuine tRNA-ribosyltransferase from Stenotrophomonas maltophilia (strain R551-3).